We begin with the raw amino-acid sequence, 411 residues long: UPF0761 membrane protein PLES_43641 (411 aa).

Transmembrane regions (helical) follow at residues 36–56, 92–112, 132–152, 174–194, 207–229, and 244–264; these read LFAV…IPAF, HLTW…LVTI, FLLY…GFAV, LLGL…YSAV, GGVF…VSLF, and IFLL…VLVC.

Belongs to the UPF0761 family.

Its subcellular location is the cell inner membrane. This is UPF0761 membrane protein PLES_43641 from Pseudomonas aeruginosa (strain LESB58).